Reading from the N-terminus, the 157-residue chain is Dihydrofolate reductase type 15 (157 aa).

A DHFR domain is found at 2 to 156 (KLSLMAAISK…INYSYQIWQK (155 aa)).

This sequence belongs to the dihydrofolate reductase family. In terms of assembly, homodimer.

The enzyme catalyses (6S)-5,6,7,8-tetrahydrofolate + NADP(+) = 7,8-dihydrofolate + NADPH + H(+). It participates in cofactor biosynthesis; tetrahydrofolate biosynthesis; 5,6,7,8-tetrahydrofolate from 7,8-dihydrofolate: step 1/1. Key enzyme in folate metabolism. Catalyzes an essential reaction for de novo glycine and purine synthesis, and for DNA precursor synthesis. The polypeptide is Dihydrofolate reductase type 15 (dhfrXV) (Escherichia coli).